The primary structure comprises 769 residues: Glutathione biosynthesis bifunctional protein GshAB (769 aa).

The glutamate--cysteine ligase stretch occupies residues Met1 to Ile347. Residues Lys514–Phe768 form the ATP-grasp domain. Ser541–Arg599 serves as a coordination point for ATP. Residues Asp721, Glu738, and Asn740 each contribute to the Mg(2+) site. Mn(2+) contacts are provided by Asp721, Glu738, and Asn740.

It in the N-terminal section; belongs to the glutamate--cysteine ligase type 1 family. Type 2 subfamily. In terms of assembly, monomer. Requires Mg(2+) as cofactor. The cofactor is Mn(2+).

It catalyses the reaction L-cysteine + L-glutamate + ATP = gamma-L-glutamyl-L-cysteine + ADP + phosphate + H(+). The catalysed reaction is gamma-L-glutamyl-L-cysteine + glycine + ATP = glutathione + ADP + phosphate + H(+). It participates in sulfur metabolism; glutathione biosynthesis; glutathione from L-cysteine and L-glutamate: step 1/2. The protein operates within sulfur metabolism; glutathione biosynthesis; glutathione from L-cysteine and L-glutamate: step 2/2. In terms of biological role, synthesizes glutathione from L-glutamate and L-cysteine via gamma-L-glutamyl-L-cysteine. This Listeria monocytogenes serotype 4b (strain F2365) protein is Glutathione biosynthesis bifunctional protein GshAB.